The primary structure comprises 525 residues: BTB/POZ domain-containing protein At1g50280 (525 aa).

Residues 5 to 79 (NDLKINLNGQ…CYHNGEILID (75 aa)) enclose the BTB domain. The NPH3 domain occupies 200–466 (EWWFEDMTNL…IEALKSRCGN (267 aa)).

It belongs to the NPH3 family.

It participates in protein modification; protein ubiquitination. Its function is as follows. May act as a substrate-specific adapter of an E3 ubiquitin-protein ligase complex (CUL3-RBX1-BTB) which mediates the ubiquitination and subsequent proteasomal degradation of target proteins. The polypeptide is BTB/POZ domain-containing protein At1g50280 (Arabidopsis thaliana (Mouse-ear cress)).